Consider the following 529-residue polypeptide: BAR/IMD domain-containing adapter protein 2-like 2 (529 aa).

Residues 1–239 form the IMD domain; sequence MAPEMDQFYR…HSPGLLGPVL (239 aa). Disordered stretches follow at residues 221–332 and 399–529; these read EASR…GGAR and NPLN…PLIR. A phosphoserine mark is found at Ser-231, Ser-272, and Ser-304. The span at 301–317 shows a compositional bias: low complexity; that stretch reads SASSLYSSSTQRSRSNS. The span at 321-331 shows a compositional bias: gly residues; that stretch reads RPGGGGGGGGA. The SH3 domain occupies 329–392; it reads GGARRVRALV…PEAYVKPLDE (64 aa). The segment covering 439 to 459 has biased composition (polar residues); that stretch reads GNSTASSDYWDGQSRSRTPSH. Over residues 473–484 the composition is skewed to low complexity; it reads PSSRRSSMGSMG. Ser-479 and Ser-482 each carry phosphoserine.

The protein localises to the cell membrane. The protein resides in the cell junction. Its subcellular location is the cytoplasmic vesicle membrane. Phosphoinositides-binding protein that induces the formation of planar or gently curved membrane structures. Binds to phosphoinositides, including to phosphatidylinositol 4,5-bisphosphate (PtdIns(4,5)P2) headgroups. There seems to be no clear preference for a specific phosphoinositide. In Bos taurus (Bovine), this protein is BAR/IMD domain-containing adapter protein 2-like 2 (BAIAP2L2).